The chain runs to 152 residues: Neuropeptide W (152 aa).

The first 32 residues, 1 to 32, serve as a signal peptide directing secretion; it reads MGARGPGPGATARRRLLALLLLLLLLPLPARA. The propeptide occupies 65–152; sequence ALRPAAGPLA…LGASSWTSAE (88 aa). Disordered regions lie at residues 79–108 and 122–152; these read GQDV…LPPG and SGIP…TSAE. Positions 96–106 are enriched in pro residues; it reads GPAPRDAPLLP.

This sequence belongs to the neuropeptide B/W family.

It localises to the secreted. Plays a regulatory role in the organization of neuroendocrine signals accessing the anterior pituitary gland. Stimulates water drinking and food intake. May play a role in the hypothalamic response to stress. The polypeptide is Neuropeptide W (NPW) (Sus scrofa (Pig)).